Consider the following 143-residue polypeptide: Large ribosomal subunit protein uL16c (143 aa).

Belongs to the universal ribosomal protein uL16 family. Part of the 50S ribosomal subunit.

Its subcellular location is the plastid. The protein resides in the chloroplast. The chain is Large ribosomal subunit protein uL16c from Spirogyra maxima (Green alga).